The following is a 65-amino-acid chain: Defensin-B3 (65 aa).

A signal peptide spans 1–21 (MRLLLVFFFLSLLDQAPPARS). Disulfide bonds link cysteine 29/cysteine 58, cysteine 36/cysteine 50, and cysteine 40/cysteine 59. Residues 62–65 (ESPR) constitute a propeptide that is removed on maturation.

Belongs to the beta-defensin family. As to expression, lowly expressed in spleen, and expressed at lower levels in kidney, lung and testis.

The protein localises to the secreted. Its function is as follows. Has antimicrobial activity. The chain is Defensin-B3 from Ornithorhynchus anatinus (Duckbill platypus).